The sequence spans 579 residues: UvrABC system protein C (579 aa).

The GIY-YIG domain maps to 12–89 (DATGVYIFRD…IKRYRPPYNV (78 aa)). One can recognise a UVR domain in the interval 193-228 (QEVIEVLEEEMKEASERLEFERAARIRDQIESIREV).

The protein belongs to the UvrC family. As to quaternary structure, interacts with UvrB in an incision complex.

It localises to the cytoplasm. In terms of biological role, the UvrABC repair system catalyzes the recognition and processing of DNA lesions. UvrC both incises the 5' and 3' sides of the lesion. The N-terminal half is responsible for the 3' incision and the C-terminal half is responsible for the 5' incision. This chain is UvrABC system protein C, found in Methanothermobacter thermautotrophicus (strain ATCC 29096 / DSM 1053 / JCM 10044 / NBRC 100330 / Delta H) (Methanobacterium thermoautotrophicum).